The chain runs to 671 residues: uncharacterized protein (671 aa).

The chain crosses the membrane as a helical span at residues 39-56; the sequence is ATVTVVILLLILLLGWGY.

The protein localises to the membrane. This is an uncharacterized protein from Treponema pallidum (strain Nichols).